We begin with the raw amino-acid sequence, 372 residues long: Cyclin-dependent kinase 9 (372 aa).

One can recognise a Protein kinase domain in the interval 19–315 (YEKLAKIGQG…SDDALNHDFF (297 aa)). Residue 25–33 (IGQGTFGEV) coordinates ATP. The residue at position 35 (Lys35) is a Phosphoserine. The residue at position 44 (Lys44) is an N6-acetyllysine; by EP300/CBP, PCAF/KAT2B and GCN5/KAT2A. Lys48 is a binding site for ATP. Position 48 is an N6-acetyllysine; by PCAF/KAT2B and GCN5/KAT2A (Lys48). Asn54 is modified (phosphothreonine). 104-106 (DFC) lines the ATP pocket. The active-site Proton acceptor is the Asp149. The tract at residues 166 to 191 (ADFGLARAFSLAKNSQPNRYTNRVVT) is T-loop. Residue Asp167 participates in ATP binding. Residue Ser175 is modified to Phosphoserine. Position 186 is a phosphothreonine; by CaMK1D (Thr186). The interval 343-372 (RRKGSQITQQSTNQSRNPATTNQTEFERVF) is disordered. Ser347 is modified (phosphoserine; by CDK9 and PKA). The span at 347–366 (SQITQQSTNQSRNPATTNQT) shows a compositional bias: polar residues. A Phosphothreonine; by CDK9 modification is found at Thr350. Position 353 is a phosphoserine; by CDK9 (Ser353). Thr354 carries the phosphothreonine; by CDK9 modification. At Ser357 the chain carries Phosphoserine; by CDK9. Phosphothreonine; by CDK9 is present on residues Thr362 and Thr363.

Belongs to the protein kinase superfamily. CMGC Ser/Thr protein kinase family. CDC2/CDKX subfamily. Component of the super elongation complex (SEC), at least composed of EAF1, EAF2, CDK9, MLLT3/AF9, AFF (AFF1 or AFF4), the P-TEFb complex and ELL (ELL, ELL2 or ELL3). Associates with CCNT1/cyclin-T1, CCNT2/cyclin-T2 (isoform A and isoform B) or CCNK/cyclin-K to form active P-TEFb. P-TEFb forms a complex with AFF4/AF5Q31 and is part of the super elongation complex (SEC). Component of a complex which is composed of at least 5 members: HTATSF1/Tat-SF1, P-TEFb complex, RNA pol II, SUPT5H and NCL/nucleolin. Associates with UBR5 and forms a transcription regulatory complex composed of CDK9, RNAP II, UBR5 and TFIIS/TCEA1 that can stimulate target gene transcription (e.g. gamma fibrinogen/FGG) by recruiting their promoters. Component of the 7SK snRNP inactive complex which is composed of at least 8 members: P-TEFb (composed of CDK9 and CCNT1/cyclin-T1), HEXIM1, HEXIM2, LARP7, BCDIN3, SART3 proteins and 7SK and U6 snRNAs. This inactive 7SK snRNP complex can also interact with NCOR1 and HDAC3, probably to regulate CDK9 acetylation. Release of P-TEFb from P-TEFb/7SK snRNP complex requires both PP2B to transduce calcium Ca(2+) signaling in response to stimuli (e.g. UV or hexamethylene bisacetamide (HMBA)) and PPP1CA to dephosphorylate Thr-186. This released P-TEFb remains inactive in the pre-initiation complex with BRD4 until new Thr-186 phosphorylation occurs after the synthesis of a short RNA. Interacts with BRD4; to target chromatin binding. Interacts with JMJD6. Interacts with activated nuclear STAT3 and RELA/p65. Binds to AR and MYOD1. Forms a complex composed of CDK9, CCNT1/cyclin-T1, EP300 and GATA4 that stimulates hypertrophy in cardiomyocytes. The large PER complex involved in the repression of transcriptional termination is composed of at least PER2, CDK9, DDX5, DHX9, NCBP1 and POLR2A. Interacts with HSF1. Interacts with TBX21. Isoform 3: binds to KU70/XRCC6. Interacts with WDR43. Interacts with ZMYND8; the association appears to occur between homodimeric ZMYND8 and the activated form of the P-TEFb complex. As to quaternary structure, (Microbial infection) Interacts with the acidic/proline-rich region of HIV-1 and HIV-2 Tat via T-loop region and is thus required for HIV to hijack host transcription machinery during its replication through cooperative binding to viral TAR RNA. In terms of assembly, (Microbial infection) Interacts with human herpes virus 1 (HHV-1) protein ICP22; this interaction blocks the recruitment of positive transcription elongation factor b (P-TEFb) to the viral promoter. Post-translationally, autophosphorylation at Thr-186, Ser-347, Thr-350, Ser-353, Thr-354 and Ser-357 triggers kinase activity by promoting cyclin and substrate binding (e.g. HIV TAT) upon conformational changes. Thr-186 phosphorylation requires the calcium Ca(2+) signaling pathway, including CaMK1D and calmodulin. This inhibition is relieved by Thr-29 dephosphorylation. However, phosphorylation at Thr-29 is inhibitory within the HIV transcription initiation complex. Phosphorylation at Ser-175 inhibits kinase activity. Can be phosphorylated on either Thr-362 or Thr-363 but not on both simultaneously. In terms of processing, dephosphorylation of Thr-186 by PPM1A and PPM1B blocks CDK9 activity and may lead to CDK9 proteasomal degradation. However, PPP1CA-mediated Thr-186 dephosphorylation is required to release P-TEFb from its inactive P-TEFb/7SK snRNP complex. Dephosphorylated at Ser-347 by the PNUTS-PP1 complex during RNA polymerase II transcription pause-release. Dephosphorylation of C-terminus Thr and Ser residues by protein phosphatase-1 (PP1) triggers CDK9 activity, contributing to the activation of HIV-1 transcription. N6-acetylation of Lys-44 promotes kinase activity, whereas acetylation of both Lys-44 and Lys-48 mediated by PCAF/KAT2B and GCN5/KAT2A reduces kinase activity. The acetylated form associates with PML bodies in the nuclear matrix and with the transcriptionally silent HIV-1 genome; deacetylated upon transcription stimulation. Deacetylated by SIRT7, promoting the kinase activity and subsequent 'Ser-2' phosphorylation of the C-terminal domain (CTD) of RNA polymerase II. Post-translationally, polyubiquitinated and thus activated by UBR5. This ubiquitination is promoted by TFIIS/TCEA1 and favors 'Ser-2' phosphorylation of RPB1/POLR2A CTD. Ubiquitous.

It localises to the nucleus. Its subcellular location is the cytoplasm. The protein localises to the PML body. The catalysed reaction is L-seryl-[protein] + ATP = O-phospho-L-seryl-[protein] + ADP + H(+). It carries out the reaction L-threonyl-[protein] + ATP = O-phospho-L-threonyl-[protein] + ADP + H(+). It catalyses the reaction [DNA-directed RNA polymerase] + ATP = phospho-[DNA-directed RNA polymerase] + ADP + H(+). Its activity is regulated as follows. Inhibited by CDKI-71, CR8, GPC-286199, AG-024322, flavopiridol (alvocidib), RBG-286147, anilinopyrimidine 32, arylazopyrazole 31b, indirubin 3'-monoxime, meriolin 3,P276-00, olomoucine II, pyrazolotriazine, meriolin, variolin, thiazolyl-pyrimidine, thiazolyl-pyrimidine, indirubin-30-monoxime, ZK 304709, AG-012986, AT7519, R547, RGB-286638, imidazole pyrimidine, EXEL-3700, EXEL-8647, 5,6-dichloro-1-b-ribofur-anosyl-benzimidazole (DRB), P276-00, roscovitine (seliciclib, CYC202) and SNS-032 (BMS-387032). Activation by Thr-186 phosphorylation is calcium Ca(2+) signaling pathway-dependent; actively inactivated by dephosphorylation mediated by PPP1CA, PPM1A and PPM1B. Reversibly repressed by acetylation at Lys-44 and Lys-48. Functionally, protein kinase involved in the regulation of transcription. Member of the cyclin-dependent kinase pair (CDK9/cyclin-T) complex, also called positive transcription elongation factor b (P-TEFb), which facilitates the transition from abortive to productive elongation by phosphorylating the CTD (C-terminal domain) of the large subunit of RNA polymerase II (RNAP II) POLR2A, SUPT5H and RDBP. This complex is inactive when in the 7SK snRNP complex form. Phosphorylates EP300, MYOD1, RPB1/POLR2A and AR and the negative elongation factors DSIF and NELFE. Regulates cytokine inducible transcription networks by facilitating promoter recognition of target transcription factors (e.g. TNF-inducible RELA/p65 activation and IL-6-inducible STAT3 signaling). Promotes RNA synthesis in genetic programs for cell growth, differentiation and viral pathogenesis. P-TEFb is also involved in cotranscriptional histone modification, mRNA processing and mRNA export. Modulates a complex network of chromatin modifications including histone H2B monoubiquitination (H2Bub1), H3 lysine 4 trimethylation (H3K4me3) and H3K36me3; integrates phosphorylation during transcription with chromatin modifications to control co-transcriptional histone mRNA processing. The CDK9/cyclin-K complex has also a kinase activity towards CTD of RNAP II and can substitute for CDK9/cyclin-T P-TEFb in vitro. Replication stress response protein; the CDK9/cyclin-K complex is required for genome integrity maintenance, by promoting cell cycle recovery from replication arrest and limiting single-stranded DNA amount in response to replication stress, thus reducing the breakdown of stalled replication forks and avoiding DNA damage. In addition, probable function in DNA repair of isoform 2 via interaction with KU70/XRCC6. Promotes cardiac myocyte enlargement. RPB1/POLR2A phosphorylation on 'Ser-2' in CTD activates transcription. AR phosphorylation modulates AR transcription factor promoter selectivity and cell growth. DSIF and NELF phosphorylation promotes transcription by inhibiting their negative effect. The phosphorylation of MYOD1 enhances its transcriptional activity and thus promotes muscle differentiation. Catalyzes phosphorylation of KAT5, promoting KAT5 recruitment to chromatin and histone acetyltransferase activity. This chain is Cyclin-dependent kinase 9, found in Homo sapiens (Human).